The chain runs to 890 residues: Serine/threonine-protein kinase D3 (890 aa).

Phosphoserine is present on residues serine 6, serine 27, serine 37, serine 41, and serine 44. The Phorbol-ester/DAG-type 1 zinc-finger motif lies at 154–204; sequence PHTLYVHSYKAPTFCDYCGEMLWGLVRQGLKCEGCGLNYHKRCAFKIPNNC. Phosphoserine occurs at positions 213 and 216. The Phorbol-ester/DAG-type 2 zinc-finger motif lies at 271 to 321; that stretch reads PHTFAVHSYTRPTICQYCKRLLKGLFRQGMQCKDCKFNCHKRCASKVPRDC. The disordered stretch occupies residues 332-371; that stretch reads SSLGTDTDIPMDIDNNDINSDSSRGLDDTEEPSPPEDKMF. A phosphoserine mark is found at serine 364, serine 391, and serine 395. One can recognise a PH domain in the interval 416–532; it reads TMVKEGWMVH…WEKAIRQALM (117 aa). Tyrosine 426 is subject to Phosphotyrosine. Position 442 is a phosphoserine (serine 442). Phosphotyrosine is present on tyrosine 457. Position 535 is a phosphothreonine (threonine 535). Position 539 is a phosphoserine (serine 539). The region spanning 576–832 is the Protein kinase domain; it reads IFADEVLGSG…VDKSLSHPWL (257 aa). Residues 582–590 and lysine 605 contribute to the ATP site; that span reads LGSGQFGIV. Aspartate 699 (proton acceptor) is an active-site residue. Serine 731 is modified (phosphoserine; by PKC). Serine 735 is modified (phosphoserine; by autocatalysis). Residue tyrosine 742 is modified to Phosphotyrosine.

Belongs to the protein kinase superfamily. CAMK Ser/Thr protein kinase family. PKD subfamily. The cofactor is Mg(2+). As to expression, ubiquitous.

It localises to the cytoplasm. The protein localises to the membrane. The enzyme catalyses L-seryl-[protein] + ATP = O-phospho-L-seryl-[protein] + ADP + H(+). It catalyses the reaction L-threonyl-[protein] + ATP = O-phospho-L-threonyl-[protein] + ADP + H(+). With respect to regulation, activated by DAG and phorbol esters. Phorbol-ester/DAG-type domains 1 and 2 bind both DAG and phorbol ester with high affinity and mediate translocation to the cell membrane. Autophosphorylation of Ser-735 and phosphorylation of Ser-731 by PKC relieves auto-inhibition by the PH domain. Functionally, converts transient diacylglycerol (DAG) signals into prolonged physiological effects, downstream of PKC. Involved in resistance to oxidative stress. This Homo sapiens (Human) protein is Serine/threonine-protein kinase D3 (PRKD3).